We begin with the raw amino-acid sequence, 123 residues long: Large ribosomal subunit protein uL14c (123 aa).

Belongs to the universal ribosomal protein uL14 family. As to quaternary structure, part of the 50S ribosomal subunit.

The protein localises to the plastid. It is found in the chloroplast. Binds to 23S rRNA. The chain is Large ribosomal subunit protein uL14c from Brachypodium distachyon (Purple false brome).